A 421-amino-acid polypeptide reads, in one-letter code: E3 ubiquitin protein ligase DRIP1 (421 aa).

The segment at 16-57 (CSICDNILRDATTISECLHTFCRKCIYEKITEDEIETCPVCN) adopts an RING-type zinc-finger fold. Polar residues-rich tracts occupy residues 106–121 (ISSLVVSTPMVSAQAG) and 157–172 (ESTSSPDTLNKFTQNK). 2 disordered regions span residues 106–198 (ISSL…WDSK) and 216–307 (PLKS…QERR). The span at 178–198 (SCKESISNKENKDGDEPWDSK) shows a compositional bias: basic and acidic residues. Positions 218-227 (KSSASQGSGS) are enriched in low complexity. Residues 244–253 (TKTKNKKRKC) show a composition bias toward basic residues. Residues 262 to 271 (NGDPTTSETV) are compositionally biased toward polar residues. Positions 274 to 284 (KRMRTTQRKRS) are enriched in basic residues. Over residues 285 to 294 (ATTLGDSRNL) the composition is skewed to polar residues.

As to quaternary structure, interacts with DREB2A. Post-translationally, autoubiquitinated. Expressed in roots, leaves and flowers.

It localises to the nucleus. It catalyses the reaction S-ubiquitinyl-[E2 ubiquitin-conjugating enzyme]-L-cysteine + [acceptor protein]-L-lysine = [E2 ubiquitin-conjugating enzyme]-L-cysteine + N(6)-ubiquitinyl-[acceptor protein]-L-lysine.. The protein operates within protein modification; protein ubiquitination. Functionally, E3 ubiquitin-protein ligase that acts as a negative regulator of the response to water stress. Mediates ubiquitination and subsequent proteasomal degradation of the drought-induced transcriptional activator DREB2A. Functionally redundant with DRIP2. The protein is E3 ubiquitin protein ligase DRIP1 (DRIP1) of Arabidopsis thaliana (Mouse-ear cress).